The primary structure comprises 646 residues: Threonine--tRNA ligase (646 aa).

The region spanning 1–63 (MAQISLTFPD…ETDAKIAIHT (63 aa)) is the TGS domain. The catalytic stretch occupies residues 247 to 544 (DHRKLGREME…LIENYAGKLP (298 aa)). Positions 344, 395, and 521 each coordinate Zn(2+).

Belongs to the class-II aminoacyl-tRNA synthetase family. As to quaternary structure, homodimer. The cofactor is Zn(2+).

The protein resides in the cytoplasm. The enzyme catalyses tRNA(Thr) + L-threonine + ATP = L-threonyl-tRNA(Thr) + AMP + diphosphate + H(+). Its function is as follows. Catalyzes the attachment of threonine to tRNA(Thr) in a two-step reaction: L-threonine is first activated by ATP to form Thr-AMP and then transferred to the acceptor end of tRNA(Thr). Also edits incorrectly charged L-seryl-tRNA(Thr). In Cereibacter sphaeroides (strain ATCC 17023 / DSM 158 / JCM 6121 / CCUG 31486 / LMG 2827 / NBRC 12203 / NCIMB 8253 / ATH 2.4.1.) (Rhodobacter sphaeroides), this protein is Threonine--tRNA ligase.